We begin with the raw amino-acid sequence, 515 residues long: 1-pyrroline-5-carboxylate dehydrogenase (515 aa).

Catalysis depends on residues glutamate 286 and cysteine 320.

The protein belongs to the aldehyde dehydrogenase family. RocA subfamily.

The enzyme catalyses L-glutamate 5-semialdehyde + NAD(+) + H2O = L-glutamate + NADH + 2 H(+). Its pathway is amino-acid degradation; L-proline degradation into L-glutamate; L-glutamate from L-proline: step 2/2. The protein is 1-pyrroline-5-carboxylate dehydrogenase of Anoxybacillus flavithermus (strain DSM 21510 / WK1).